A 493-amino-acid polypeptide reads, in one-letter code: Probable polyol transporter 6 (493 aa).

12 helical membrane-spanning segments follow: residues 25–45 (SIVSIIFGYDTGVMSGAMVFI), 54–74 (VQIEVLTGILNLCALVGSLLA), 85–105 (YTIVLASILFMLGSILMGWGP), 116–136 (TAGLGVGFALMVAPVYSAEIA), 142–162 (GLLASLPHLCISIGILLGYIV), 177–197 (LMLGIAAVPSLVLAFGILKMP), 275–295 (VLLTALGIHFFQHASGIEAVL), 313–333 (LFLVTIGVGIMKTTFIFTATL), 343–363 (LLLTSVGGMVIALTMLGFGLT), 372–392 (LAWALVLSIVAAYSFVAFFSI), 414–434 (GASLGVAVNRVMNATVSMSFL), and 444–464 (GAFFMFAGVAAVAWNFFFFLL).

Belongs to the major facilitator superfamily. Sugar transporter (TC 2.A.1.1) family.

The protein localises to the membrane. Plasma membrane sugar-proton symporter. This Arabidopsis thaliana (Mouse-ear cress) protein is Probable polyol transporter 6 (PLT6).